The primary structure comprises 436 residues: Drebrin-like protein (436 aa).

An ADF-H domain is found at 2 to 133 (AVNLSRNGPA…EPECIMEKVA (132 aa)). A Phosphothreonine modification is found at Thr-26. Position 160 is a phosphoserine (Ser-160). Lys-176 is subject to N6-acetyllysine. Positions 178–232 (NFWAKAEKEEENRRLEEKRRAEEEKQRLEEERRERELQEAARREQRYQEQHRSAG) form a coiled coil. Basic and acidic residues-rich tracts occupy residues 185 to 229 (KEEE…EQHR) and 264 to 275 (HPREIFKQKERA). A disordered region spans residues 185–371 (KEEENRRLEE…GSGHIDNYMQ (187 aa)). Over residues 276–286 (MSTTSVSSSQP) the composition is skewed to polar residues. Phosphoserine is present on residues Ser-277, Ser-280, Ser-283, and Ser-291. Lys-296 bears the N6-acetyllysine mark. A Phosphothreonine modification is found at Thr-299. The residue at position 311 (Ser-311) is a Phosphoserine. Residues Tyr-340 and Tyr-350 each carry the phosphotyrosine modification. Positions 377–436 (GQGLCARALYDYQAADDTEISFDPENLITGIEVIDEGWWRGYGPDGHFGMFPANYVELIE) constitute an SH3 domain.

The protein belongs to the ABP1 family. As to quaternary structure, interacts with FGD1, MAP4K1 and PRAM1. Interacts with ANKRD54. Interacts with WASL and WIPF1. Interacts with SHANK2 and SHANK3. Interacts with both COBL and PACSIN1. Interacts with DNM1 and SYN1. In terms of tissue distribution, detected in brain (at protein level). Widely expressed in brain with highest levels in hippocampus and cerebral cortex. Located primarily in dendrites and, in moderate amounts, in cell bodies. Isoform 1 and isoform 3 are the predominant isoforms in brain.

It localises to the cytoplasm. The protein localises to the cytoskeleton. The protein resides in the cell projection. Its subcellular location is the lamellipodium. It is found in the ruffle. It localises to the cell cortex. The protein localises to the cytosol. The protein resides in the cell membrane. Its subcellular location is the synapse. It is found in the perikaryon. It localises to the neuron projection. The protein localises to the dendrite. The protein resides in the postsynaptic density. Its subcellular location is the golgi apparatus membrane. It is found in the cytoplasmic vesicle. It localises to the clathrin-coated vesicle membrane. The protein localises to the podosome. The protein resides in the early endosome. In terms of biological role, adapter protein that binds F-actin and DNM1, and thereby plays a role in receptor-mediated endocytosis. Required for the formation of organized podosome rosettes. May act as a common effector of antigen receptor-signaling pathways in leukocytes. Acts as a key component of the immunological synapse that regulates T-cell activation by bridging TCRs and the actin cytoskeleton to gene activation and endocytic processes. Plays a role in the reorganization of the actin cytoskeleton, formation of cell projections, such as neurites, in neuron morphogenesis and synapse formation via its interaction with WASL and COBL. Does not bind G-actin and promote actin polymerization by itself. The chain is Drebrin-like protein from Rattus norvegicus (Rat).